A 703-amino-acid polypeptide reads, in one-letter code: Protein FAR1-RELATED SEQUENCE 6 (703 aa).

Positions 1-29 (MERSESVDEDVQASAYLENDEVRERDDPM) are disordered. The 86-residue stretch at 99–184 (NYYNCYASEV…TLDHNHLLGC (86 aa)) folds into the FAR1 domain. One can recognise an MULE domain in the interval 297–392 (VIFIDSSYIS…SLTHIMRKIP (96 aa)). An SWIM-type zinc finger spans residues 584–620 (FEVLYNRSVGEVRCICSCFNFYGYLCRHALCVLNFNG).

It belongs to the FHY3/FAR1 family. Expressed in hypocotyls, rosette and cauline leaves, inflorescences stems, flowers and siliques.

Its subcellular location is the nucleus. Putative transcription activator involved in regulating light control of development. May have a role in controlling flowering time. This chain is Protein FAR1-RELATED SEQUENCE 6 (FRS6), found in Arabidopsis thaliana (Mouse-ear cress).